We begin with the raw amino-acid sequence, 339 residues long: UPF0324 membrane protein M6_Spy0799 (339 aa).

9 helical membrane passes run 7–24 (KLPGLLLCLLLALPAWYL), 28–50 (FPIIGAPVFAILLGMLLALFYEH), 57–79 (GISFTSKYILQTAVVLLGFGLNL), 84–106 (AVGMQSLPIIISTIATALLVAYG), 118–140 (ATLVGVGSSICGGSAIAATAPVI), 150–172 (AISVIFLFNMLAALLFPSLGQLL), 256–275 (FILFFLLASLITTLMISLGV), 290–307 (FIVMAMAAIGLNTNLVKL), and 314–336 (AILLGAICWVAITLVSLAMQLSL).

Belongs to the UPF0324 family.

It is found in the cell membrane. This chain is UPF0324 membrane protein M6_Spy0799, found in Streptococcus pyogenes serotype M6 (strain ATCC BAA-946 / MGAS10394).